We begin with the raw amino-acid sequence, 223 residues long: uncharacterized protein (223 aa).

A signal peptide spans 1 to 22 (MHLKKALCPALCTFLIHLCLHA). One can recognise a VWFA domain in the interval 30–204 (DIFLMIDKSR…RSIAAAHSKR (175 aa)). Positions 199 to 223 (AAHSKRPTPTPPAKESSPRYTPSLD) are disordered.

This is an uncharacterized protein from Treponema pallidum (strain Nichols).